Here is a 308-residue protein sequence, read N- to C-terminus: MPGQELKTLNGSQMLLVLLVLLWPPHGGAVSLAEASRASFPGPSDLHSEDSRFRELRKRYEDLLTRLRANQSWEDSNTDLIQAPEVRILTPEVRLGSGGHLHLRISRAVLPEGLPEACRIHRALFRLSPTASRSRDVTRPLRRQLRLARPQAPALHLRLSPPPSQSDQLLVKSSSSRPQLALHLRPRASRGRRRARARNGDRCPLGPGRCCRLHTVHASLEDLGWADWVLSPREVQVTMCIGACPSQFREANMHAQIKMNLHRLKPDTVPAPCCVPASYNPMVLIQKTDTGVSLQTYDDLLAKDCHCV.

Positions 1–29 (MPGQELKTLNGSQMLLVLLVLLWPPHGGA) are cleaved as a signal peptide. The propeptide occupies 30-192 (VSLAEASRAS…HLRPRASRGR (163 aa)). N-linked (GlcNAc...) asparagine glycosylation occurs at Asn-70. Residues 152–179 (APALHLRLSPPPSQSDQLLVKSSSSRPQ) form a disordered region. Residues 165-178 (QSDQLLVKSSSSRP) are compositionally biased toward polar residues. Intrachain disulfides connect Cys-203/Cys-210, Cys-211/Cys-274, Cys-240/Cys-305, and Cys-244/Cys-307.

It belongs to the TGF-beta family. Homodimer; disulfide-linked. Interacts with GFRAL and RET; ligand of GFRAL, which mediates GDF15 internalization and cellular signaling through interaction with RET via the formation of a 2:2:2 ternary complex composed of GDF15, GFRAL and RET. In terms of tissue distribution, detected in plasma (at protein level).

It localises to the secreted. In terms of biological role, hormone produced in response to various stresses to confer information about those stresses to the brain, and trigger an aversive response, characterized by nausea and/or loss of appetite. The aversive response is both required to reduce continuing exposure to those stresses at the time of exposure and to promote avoidance behavior in the future. Acts by binding to its receptor, GFRAL, activating GFRAL-expressing neurons localized in the area postrema and nucleus tractus solitarius of the brainstem. It then triggers the activation of neurons localized within the parabrachial nucleus and central amygdala, which constitutes part of the 'emergency circuit' that shapes responses to stressful conditions. The GDF15-GFRAL signal induces expression of genes involved in metabolism, such as lipid metabolism in adipose tissues. Required for avoidance behavior in response to food allergens: induced downstream of mast cell activation to promote aversion and minimize harmful effects of exposure to noxious substances. In addition to suppress appetite, also promotes weight loss by enhancing energy expenditure in muscle: acts by increasing calcium futile cycling in muscle. Contributes to the effect of metformin, an anti-diabetic drug, on appetite reduction and weight loss: produced in the kidney in response to metformin treatment, thereby activating the GDF15-GFRAL response, leading to reduced appetite and weight. Produced in response to anticancer drugs, such as camptothecin or cisplatin, promoting nausea and contributing to malnutrition. Overproduced in many cancers, promoting anorexia in cancer (cachexia). Responsible for the risk of nausea during pregnancy: high levels of GDF15 during pregnancy, mostly originating from embryos, are associated with increased nausea. Maternal sensitivity to nausea is probably determined by pre-pregnancy exposure to GDF15, females with naturally high level of GDF15 being less susceptible to nausea than females with low levels of GDF15 before pregnancy. Promotes metabolic adaptation in response to systemic inflammation caused by bacterial and viral infections in order to promote tissue tolerance and prevent tissue damage. Inhibits growth hormone signaling on hepatocytes. The polypeptide is Growth/differentiation factor 15 (Macaca fascicularis (Crab-eating macaque)).